Consider the following 384-residue polypeptide: uncharacterized protein (384 aa).

This is an uncharacterized protein from Methanocaldococcus jannaschii (strain ATCC 43067 / DSM 2661 / JAL-1 / JCM 10045 / NBRC 100440) (Methanococcus jannaschii).